The following is a 702-amino-acid chain: MGIQGLLPQLKPIQNPVSLRRYEGEVLAIDGYAWLHRAACSCAYELAMGKPTDKYLQFFIKRFSLLKTFKVEPYLVFDGDAIPVKKSTESKRRDKRKENKAIAERLWACGEKKNAMDYFQKCVDITPEMAKCIICYCKLNGIRYIVAPFEADSQMVYLEQKNIVQGIISEDSDLLVFGCRRLITKLNDYGECLEICRDNFIKLPKKFPLGSLTNEEIITMVCLSGCDYTNGIPKVGLITAMKLVRRFNTIERIILSIQREGKLMIPDTYINEYEAAVLAFQFQRVFCPIRKKIVSLNEIPLYLKDTESKRKRLYACIGFVIHRETQKKQIVHFDDDIDHHLHLKIAQGDLNPYDFHQPLANREHKLQLASKSNIEFGKTNTTNSEAKVKPIESFFQKMTKLDHNPKVANNIHSLRQAEDKLTMAIKRRKLSNANVVQETLKDTRSKFFNKPSMTVVENFKEKGDSIQDFKEDTNSQSLEEPVSESQLSTQIPSSFITTNLEDDDNLSEEVSEVVSDIEEDRKNSEGKTIGNEIYNTDDDGDGDTSEDYSETAESRVPTSSTTSFPGSSQRSISGCTKVLQKFRYSSSFSGVNANRQPLFPRHVNQKSRGMVYVNQNRDDDCDDNDGKNQITQRPSLRKSLIGARSQRIVIDMKSVDERKSFNSSPILHEESKKRDIETTKSSQARPAVRSISLLSQFVYKGK.

The tract at residues 1 to 96 is N-domain; that stretch reads MGIQGLLPQL…STESKRRDKR (96 aa). Residues Asp-30, Asp-78, Glu-150, Asp-152, Asp-171, Asp-173, and Asp-227 each contribute to the Mg(2+) site. The I-domain stretch occupies residues 114–247; it reads NAMDYFQKCV…ITAMKLVRRF (134 aa). Ser-372 carries the phosphoserine modification. 2 disordered regions span residues 465 to 571 and 660 to 685; these read SIQD…SQRS and SFNS…SQAR. Residues 474–498 show a composition bias toward polar residues; the sequence is NSQSLEEPVSESQLSTQIPSSFITT. Acidic residues-rich tracts occupy residues 500-518 and 535-550; these read LEDD…SDIE and NTDD…DYSE. The segment covering 558–571 has biased composition (low complexity); it reads TSSTTSFPGSSQRS. Residues 667-678 are compositionally biased toward basic and acidic residues; sequence LHEESKKRDIET.

It belongs to the XPG/RAD2 endonuclease family. EXO1 subfamily. In terms of assembly, interacts with mismatch repair protein MSH2. Mg(2+) serves as cofactor.

It is found in the nucleus. Inactivated by calcium and zinc ions. Its function is as follows. 5'-&gt;3' double-stranded DNA exonuclease involved in mismatch repair and eventually also in mitotic recombination between direct repeats. Also has a minor role in the correction of large DNA mismatches that occur in the heteroduplex DNA during meiotic recombination at the HIS4 locus. The polypeptide is Exodeoxyribonuclease 1 (EXO1) (Saccharomyces cerevisiae (strain ATCC 204508 / S288c) (Baker's yeast)).